The following is a 389-amino-acid chain: Major outer membrane porin (389 aa).

The first 23 residues, 1-23, serve as a signal peptide directing secretion; sequence MKKLLKSALLSAAFAGSVGSLQA.

The protein belongs to the chlamydial porin (CP) (TC 1.B.2) family. In terms of assembly, part of a disulfide cross-linked outer membrane complex (COMC) composed of the major outer membrane porin (MOMP), the small cysteine-rich protein (OmcA) and the large cysteine-rich periplasmic protein (OmcB).

Its subcellular location is the cell outer membrane. Its function is as follows. In elementary bodies (EBs, the infectious stage, which is able to survive outside the host cell) provides the structural integrity of the outer envelope through disulfide cross-links with the small cysteine-rich protein and the large cysteine-rich periplasmic protein. It has been described in publications as the Sarkosyl-insoluble COMC (Chlamydia outer membrane complex), and serves as the functional equivalent of peptidoglycan. In terms of biological role, permits diffusion of specific solutes through the outer membrane. This chain is Major outer membrane porin (ompA), found in Chlamydia pneumoniae (Chlamydophila pneumoniae).